The primary structure comprises 301 residues: MANLRDIRKKIGSVKNTQRITHAMKLVSTSKLRKAEEVARNSRAYALKLDAVFDDVLSKMKNQGIEDIQSKYFRELERLEIKKVDIIFITADKGLCGGFNTNTIKKVLACTNEYKEKDIKVRLRGIGKKGNEYFSFNGIEVLDKINNLSSMPNYERAQEFMKKVVEDYLSGKTDKVIIIHNGFKNMITQEIRVKTILPIGYKIIHQNPQPSETQETITSEPSGSEDEILDSLAEKYVEYSLYYALIDSLAAEHSARMQAMDTATNNAKDLVKTLTISYNKARQEAITTELVEINAGVEALK.

This sequence belongs to the ATPase gamma chain family. In terms of assembly, F-type ATPases have 2 components, CF(1) - the catalytic core - and CF(0) - the membrane proton channel. CF(1) has five subunits: alpha(3), beta(3), gamma(1), delta(1), epsilon(1). CF(0) has three main subunits: a, b and c.

It localises to the cell inner membrane. Produces ATP from ADP in the presence of a proton gradient across the membrane. The gamma chain is believed to be important in regulating ATPase activity and the flow of protons through the CF(0) complex. This is ATP synthase gamma chain from Helicobacter pylori (strain J99 / ATCC 700824) (Campylobacter pylori J99).